A 184-amino-acid polypeptide reads, in one-letter code: Secreted protein B (184 aa).

An N-terminal signal peptide occupies residues 1 to 19 (MRFILVLVLILGLVSSSFG). Residue N129 is glycosylated (N-linked (GlcNAc...) asparagine). The Cell attachment site motif lies at 164-166 (RGD).

It belongs to the Sct family.

The protein resides in the secreted. The chain is Secreted protein B (29C) from Dictyostelium discoideum (Social amoeba).